The chain runs to 350 residues: ATPase GET3 (350 aa).

26-33 (KGGVGKTT) provides a ligand contact to ATP. The active site involves D57. Positions 243 and 270 each coordinate ATP. Zn(2+)-binding residues include C282 and C285.

The protein belongs to the arsA ATPase family. In terms of assembly, homodimer. Component of the Golgi to ER traffic (GET) complex, which is composed of GET1, GET2 and GET3. Within the complex, GET1 and GET2 form a heterotetramer which is stabilized by phosphatidylinositol binding and which binds to the GET3 homodimer. Interacts with the chloride channel protein GEF1.

Its subcellular location is the cytoplasm. It is found in the endoplasmic reticulum. It localises to the golgi apparatus. Its function is as follows. ATPase required for the post-translational delivery of tail-anchored (TA) proteins to the endoplasmic reticulum. Recognizes and selectively binds the transmembrane domain of TA proteins in the cytosol. This complex then targets to the endoplasmic reticulum by membrane-bound receptors GET1 and GET2, where the tail-anchored protein is released for insertion. This process is regulated by ATP binding and hydrolysis. ATP binding drives the homodimer towards the closed dimer state, facilitating recognition of newly synthesized TA membrane proteins. ATP hydrolysis is required for insertion. Subsequently, the homodimer reverts towards the open dimer state, lowering its affinity for the GET1-GET2 receptor, and returning it to the cytosol to initiate a new round of targeting. Cooperates with the HDEL receptor ERD2 to mediate the ATP-dependent retrieval of resident ER proteins that contain a C-terminal H-D-E-L retention signal from the Golgi to the ER. Involved in low-level resistance to the oxyanions arsenite and arsenate, and in heat tolerance. This Candida albicans (strain SC5314 / ATCC MYA-2876) (Yeast) protein is ATPase GET3.